The following is a 295-amino-acid chain: Ethanolamine ammonia-lyase small subunit (295 aa).

Residues Val-207, Glu-228, and Cys-258 each contribute to the adenosylcob(III)alamin site.

Belongs to the EutC family. The basic unit is a heterodimer which dimerizes to form tetramers. The heterotetramers trimerize; 6 large subunits form a core ring with 6 small subunits projecting outwards. Adenosylcob(III)alamin serves as cofactor.

It localises to the bacterial microcompartment. It catalyses the reaction ethanolamine = acetaldehyde + NH4(+). The protein operates within amine and polyamine degradation; ethanolamine degradation. Catalyzes the deamination of various vicinal amino-alcohols to oxo compounds. Allows this organism to utilize ethanolamine as the sole source of nitrogen and carbon in the presence of external vitamin B12. The chain is Ethanolamine ammonia-lyase small subunit from Escherichia coli (strain SE11).